A 238-amino-acid polypeptide reads, in one-letter code: MAVEGGMKCVKFLLYVLLLAFCACAVGLIAVGVGAQLVLSQTITHGATPGSLLPVVIIAVGAFLFLVAFVGCCGTCKENYCLMITFAIFLSLIMLVEVAAAIAGYVFRDKVMSEFNKDFRQQMQNYSTDNQTALILDRMQKDFTCCGAANYTDWATIPGMTRDRVPDSCCVNVTSGCGVKFNVKDIYVEGCVEKIGLWLRKNVLVVAAAALGIAFVEVLGIVFACCLVKSIRSGYEVM.

The Cytoplasmic portion of the chain corresponds to 1–11; sequence MAVEGGMKCVK. A helical transmembrane segment spans residues 12–32; the sequence is FLLYVLLLAFCACAVGLIAVG. Residues 33–51 lie on the Extracellular side of the membrane; that stretch reads VGAQLVLSQTITHGATPGS. The helical transmembrane segment at 52-72 threads the bilayer; that stretch reads LLPVVIIAVGAFLFLVAFVGC. At 73 to 81 the chain is on the cytoplasmic side; the sequence is CGTCKENYC. Residues 82–102 traverse the membrane as a helical segment; that stretch reads LMITFAIFLSLIMLVEVAAAI. Residues 103–203 are Extracellular-facing; sequence AGYVFRDKVM…KIGLWLRKNV (101 aa). Residues asparagine 125, asparagine 130, asparagine 150, and asparagine 172 are each glycosylated (N-linked (GlcNAc...) asparagine). The chain crosses the membrane as a helical span at residues 204–224; the sequence is LVVAAAALGIAFVEVLGIVFA. The Cytoplasmic segment spans residues 225 to 238; sequence CCLVKSIRSGYEVM. A Lysosomal targeting motif motif is present at residues 234 to 238; that stretch reads GYEVM.

Belongs to the tetraspanin (TM4SF) family. In terms of assembly, interacts with TIMP1 and ITGB1 and recruits TIMP1 to ITGB1. Interacts with CD9. Identified in a complex with CD9 and ITGB3. Interacts with PMEL. Interacts with KDR/VEGFR2; identified in a complex with ITGB1 and KDR/VEGFR2 and is required to recruit KDR to ITGB1 complexes. Interacts with SYT7. In terms of processing, palmitoylated at a low, basal level in unstimulated platelets. The level of palmitoylation increases when platelets are activated by thrombin (in vitro).

It is found in the cell membrane. Its subcellular location is the lysosome membrane. It localises to the late endosome membrane. The protein resides in the endosome. The protein localises to the multivesicular body. It is found in the melanosome. Its subcellular location is the secreted. It localises to the extracellular exosome. The protein resides in the cell surface. In terms of biological role, functions as a cell surface receptor for TIMP1 and plays a role in the activation of cellular signaling cascades. Plays a role in the activation of ITGB1 and integrin signaling, leading to the activation of AKT, FAK/PTK2 and MAP kinases. Promotes cell survival, reorganization of the actin cytoskeleton, cell adhesion, spreading and migration, via its role in the activation of AKT and FAK/PTK2. Plays a role in VEGFA signaling via its role in regulating the internalization of KDR/VEGFR2. Plays a role in intracellular vesicular transport processes, and is required for normal trafficking of the PMEL luminal domain that is essential for the development and maturation of melanocytes. Plays a role in the adhesion of leukocytes onto endothelial cells via its role in the regulation of SELP trafficking. May play a role in mast cell degranulation in response to Ms4a2/FceRI stimulation, but not in mast cell degranulation in response to other stimuli. The polypeptide is CD63 antigen (CD63) (Oryctolagus cuniculus (Rabbit)).